Reading from the N-terminus, the 652-residue chain is Type III restriction-modification enzyme StyLTI Mod subunit (652 aa).

Residues D135–Y138 are binding of S-adenosyl methionine.

It belongs to the N(4)/N(6)-methyltransferase family. Homodimer, also forms a functional restriction-competent complex with Res.

The enzyme catalyses a 2'-deoxyadenosine in DNA + S-adenosyl-L-methionine = an N(6)-methyl-2'-deoxyadenosine in DNA + S-adenosyl-L-homocysteine + H(+). Its function is as follows. A beta subtype methylase that binds the system-specific DNA recognition site 5'-CAGAG-3' and methylates A-4 (of only 1 strand as the other does not have an A residue). DNA restriction requires both the Res and Mod subunits. The protein is Type III restriction-modification enzyme StyLTI Mod subunit of Salmonella typhimurium (strain LT2 / SGSC1412 / ATCC 700720).